Consider the following 456-residue polypeptide: Tyrosinase-like protein (456 aa).

An N-terminal signal peptide occupies residues 1 to 22; sequence MNTMTLLGKVFLLQFLIGVGFC. Residues histidine 145, histidine 154, histidine 163, histidine 295, histidine 299, and histidine 322 each coordinate Cu cation.

This sequence belongs to the tyrosinase family. Cu(2+) is required as a cofactor. Prismatic layer of shell (at protein level).

It localises to the secreted. The sequence is that of Tyrosinase-like protein from Pinctada maxima (Silver-lipped pearl oyster).